A 202-amino-acid chain; its full sequence is Putative 3-methyladenine DNA glycosylase (202 aa).

This sequence belongs to the DNA glycosylase MPG family.

This is Putative 3-methyladenine DNA glycosylase from Staphylococcus aureus (strain MRSA252).